The primary structure comprises 59 residues: uncharacterized protein (59 aa).

This is an uncharacterized protein from Archaeoglobus fulgidus (strain ATCC 49558 / DSM 4304 / JCM 9628 / NBRC 100126 / VC-16).